The sequence spans 527 residues: Bifunctional purine biosynthesis protein PurH (527 aa).

The 149-residue stretch at 1 to 149 (MASDFLPVRR…KNFARVAVAT (149 aa)) folds into the MGS-like domain.

This sequence belongs to the PurH family.

The enzyme catalyses (6R)-10-formyltetrahydrofolate + 5-amino-1-(5-phospho-beta-D-ribosyl)imidazole-4-carboxamide = 5-formamido-1-(5-phospho-D-ribosyl)imidazole-4-carboxamide + (6S)-5,6,7,8-tetrahydrofolate. The catalysed reaction is IMP + H2O = 5-formamido-1-(5-phospho-D-ribosyl)imidazole-4-carboxamide. It functions in the pathway purine metabolism; IMP biosynthesis via de novo pathway; 5-formamido-1-(5-phospho-D-ribosyl)imidazole-4-carboxamide from 5-amino-1-(5-phospho-D-ribosyl)imidazole-4-carboxamide (10-formyl THF route): step 1/1. Its pathway is purine metabolism; IMP biosynthesis via de novo pathway; IMP from 5-formamido-1-(5-phospho-D-ribosyl)imidazole-4-carboxamide: step 1/1. In Xanthomonas oryzae pv. oryzae (strain PXO99A), this protein is Bifunctional purine biosynthesis protein PurH.